Reading from the N-terminus, the 150-residue chain is 3-hydroxyacyl-[acyl-carrier-protein] dehydratase FabZ (150 aa).

Residue histidine 54 is part of the active site.

Belongs to the thioester dehydratase family. FabZ subfamily.

It localises to the cytoplasm. The enzyme catalyses a (3R)-hydroxyacyl-[ACP] = a (2E)-enoyl-[ACP] + H2O. Involved in unsaturated fatty acids biosynthesis. Catalyzes the dehydration of short chain beta-hydroxyacyl-ACPs and long chain saturated and unsaturated beta-hydroxyacyl-ACPs. The chain is 3-hydroxyacyl-[acyl-carrier-protein] dehydratase FabZ from Pseudoalteromonas translucida (strain TAC 125).